A 23-amino-acid polypeptide reads, in one-letter code: Cardioactive peptide CAP23 (23 aa).

A disulfide bridge connects residues C7 and C19.

It belongs to the GBP/PSP1/paralytic peptide family.

In terms of biological role, has excitatory effects on a semi-isolated heart from larval Manduca sexta, causing an inotropic effect at low concentrations of peptide and chronotropic and inotropic effects at high doses. The sequence is that of Cardioactive peptide CAP23 from Spodoptera eridania (Southern armyworm).